The sequence spans 138 residues: ATP synthase epsilon chain (138 aa).

Belongs to the ATPase epsilon chain family. F-type ATPases have 2 components, CF(1) - the catalytic core - and CF(0) - the membrane proton channel. CF(1) has five subunits: alpha(3), beta(3), gamma(1), delta(1), epsilon(1). CF(0) has three main subunits: a, b and c.

Its subcellular location is the cell membrane. Its function is as follows. Produces ATP from ADP in the presence of a proton gradient across the membrane. This chain is ATP synthase epsilon chain (atpC), found in Streptococcus mutans serotype c (strain ATCC 700610 / UA159).